Here is a 344-residue protein sequence, read N- to C-terminus: N-acetyl-gamma-glutamyl-phosphate reductase (344 aa).

The active site involves Cys150.

The protein belongs to the NAGSA dehydrogenase family. Type 1 subfamily.

It is found in the cytoplasm. The enzyme catalyses N-acetyl-L-glutamate 5-semialdehyde + phosphate + NADP(+) = N-acetyl-L-glutamyl 5-phosphate + NADPH + H(+). The protein operates within amino-acid biosynthesis; L-arginine biosynthesis; N(2)-acetyl-L-ornithine from L-glutamate: step 3/4. Catalyzes the NADPH-dependent reduction of N-acetyl-5-glutamyl phosphate to yield N-acetyl-L-glutamate 5-semialdehyde. The sequence is that of N-acetyl-gamma-glutamyl-phosphate reductase from Azotobacter vinelandii (strain DJ / ATCC BAA-1303).